The following is a 239-amino-acid chain: Ribosomal RNA small subunit methyltransferase G (239 aa).

Residues Gly-79, Phe-84, Ala-130–Glu-131, and Arg-149 each bind S-adenosyl-L-methionine. Residues Lys-218–Pro-227 show a composition bias toward basic residues. The tract at residues Lys-218–Ala-239 is disordered.

The protein belongs to the methyltransferase superfamily. RNA methyltransferase RsmG family.

The protein localises to the cytoplasm. In terms of biological role, specifically methylates the N7 position of a guanine in 16S rRNA. This chain is Ribosomal RNA small subunit methyltransferase G, found in Leuconostoc citreum (strain KM20).